Reading from the N-terminus, the 594-residue chain is Putative lipase ATG15-1 (594 aa).

Residues 1-12 (MRRRPLCTSASR) lie on the Cytoplasmic side of the membrane. The helical; Signal-anchor for type II membrane protein transmembrane segment at 13 to 33 (VTASLLLSFLAVSSAAELPIL) threads the bilayer. The Lumenal portion of the chain corresponds to 34–594 (PAPPISPQPH…ANHFVYVLHA (561 aa)). N144, N179, N201, N259, and N283 each carry an N-linked (GlcNAc...) asparagine glycan. The Charge relay system role is filled by S299. N-linked (GlcNAc...) asparagine glycosylation is found at N432 and N445. Residues 447–469 (TETTTTSTSKPTSTSKSSKSNTR) show a composition bias toward low complexity. Disordered stretches follow at residues 447–473 (TETT…TRTE) and 489–509 (TGTQ…TSTC). Residues N576 and N582 are each glycosylated (N-linked (GlcNAc...) asparagine).

This sequence belongs to the AB hydrolase superfamily. Lipase family. As to quaternary structure, binds to both phosphatidylinositol (PI) and phosphatidylinositol 3,5-bisphosphate (PIP2).

It localises to the endosome. The protein resides in the multivesicular body membrane. The protein localises to the prevacuolar compartment membrane. The catalysed reaction is a triacylglycerol + H2O = a diacylglycerol + a fatty acid + H(+). Lipase which is essential for lysis of subvacuolar cytoplasm to vacuole targeted bodies and intravacuolar autophagic bodies. Involved in the lysis of intravacuolar multivesicular body (MVB) vesicles. The intravacuolar membrane disintegration by ATG15 is critical to life span extension. This is Putative lipase ATG15-1 (ATG15-1) from Phaeosphaeria nodorum (strain SN15 / ATCC MYA-4574 / FGSC 10173) (Glume blotch fungus).